The primary structure comprises 627 residues: Putative polyketide hydroxylase (627 aa).

FAD-binding positions include 22 to 51 (PVLVVGGSLVGLSTSVFLGRLGVRHTLVER) and 309 to 319 (YRSGRVLLAGD). The disordered stretch occupies residues 370 to 469 (AEATSARAAH…GGGPGGGGPQ (100 aa)). Residues 395–469 (AGGGGPGAGT…GGGPGGGGPQ (75 aa)) are compositionally biased toward gly residues.

Belongs to the PheA/TfdB FAD monooxygenase family. Requires FAD as cofactor.

Functionally, involved in developmentally regulated synthesis of a compound biosynthetically related to polyketide antibiotics which is essential for spore color in Streptococcus coelicolor. The chain is Putative polyketide hydroxylase from Streptomyces coelicolor (strain ATCC BAA-471 / A3(2) / M145).